The primary structure comprises 355 residues: Peptide chain release factor 1 (355 aa).

An N5-methylglutamine modification is found at Q233.

The protein belongs to the prokaryotic/mitochondrial release factor family. Methylated by PrmC. Methylation increases the termination efficiency of RF1.

It is found in the cytoplasm. Peptide chain release factor 1 directs the termination of translation in response to the peptide chain termination codons UAG and UAA. This is Peptide chain release factor 1 from Bacillus cytotoxicus (strain DSM 22905 / CIP 110041 / 391-98 / NVH 391-98).